The sequence spans 460 residues: Inactive ubiquitin carboxyl-terminal hydrolase MINDY-4B (460 aa).

The interval 41–76 (TNNSTPQNHEGNHTSADENEDGTGLSQPKGQGHLPS) is disordered.

Belongs to the MINDY deubiquitinase family. FAM188 subfamily.

This chain is Inactive ubiquitin carboxyl-terminal hydrolase MINDY-4B, found in Homo sapiens (Human).